Reading from the N-terminus, the 480-residue chain is Protein nucleotidyltransferase YdiU (480 aa).

The ATP site is built by glycine 86, glycine 88, arginine 89, lysine 109, aspartate 121, glycine 122, arginine 172, and arginine 179. Aspartate 248 serves as the catalytic Proton acceptor. The Mg(2+) site is built by asparagine 249 and aspartate 258. Position 258 (aspartate 258) interacts with ATP.

Belongs to the SELO family. The cofactor is Mg(2+). Mn(2+) serves as cofactor.

The catalysed reaction is L-seryl-[protein] + ATP = 3-O-(5'-adenylyl)-L-seryl-[protein] + diphosphate. The enzyme catalyses L-threonyl-[protein] + ATP = 3-O-(5'-adenylyl)-L-threonyl-[protein] + diphosphate. It carries out the reaction L-tyrosyl-[protein] + ATP = O-(5'-adenylyl)-L-tyrosyl-[protein] + diphosphate. It catalyses the reaction L-histidyl-[protein] + UTP = N(tele)-(5'-uridylyl)-L-histidyl-[protein] + diphosphate. The catalysed reaction is L-seryl-[protein] + UTP = O-(5'-uridylyl)-L-seryl-[protein] + diphosphate. The enzyme catalyses L-tyrosyl-[protein] + UTP = O-(5'-uridylyl)-L-tyrosyl-[protein] + diphosphate. In terms of biological role, nucleotidyltransferase involved in the post-translational modification of proteins. It can catalyze the addition of adenosine monophosphate (AMP) or uridine monophosphate (UMP) to a protein, resulting in modifications known as AMPylation and UMPylation. The polypeptide is Protein nucleotidyltransferase YdiU (Salmonella paratyphi A (strain ATCC 9150 / SARB42)).